A 321-amino-acid chain; its full sequence is MTKFALVGDVGGTNARLALCDLASGEISRAKTYSGLDYPSLEAVVRVYLEEHQVTVNEGCIAIACPITGDWVAMTNHTWAFSIAEMKRNLGFAHLEIINDFTAVSMAIPMLKAEHLIQFGGSAPVAGKPIAVYGAGTGLGVAHLVHVDKRWVSLPGEGGHVDFAPNSEEEGIILEELRAELGHVSAERVLSGPGLVNLYRAIVKSDGRLPENLQPREVTERALADSCTDCRRALSLFCVIMGRFGGNLALTLGTFGGVYIAGGIVPRFLEFFKASGFRGGFEDKGRFKAYVQDIPVYLIVHENPGLLGSGAHLRQTLGQVL.

8–13 is an ATP binding site; it reads GDVGGT.

This sequence belongs to the bacterial glucokinase family.

The protein resides in the cytoplasm. It catalyses the reaction D-glucose + ATP = D-glucose 6-phosphate + ADP + H(+). The chain is Glucokinase from Klebsiella pneumoniae (strain 342).